We begin with the raw amino-acid sequence, 326 residues long: MVWANAKMRLALSLVTVFFGISLANLEVGFYSNTCPQAESIVKRVVSGAALSDPNLPAILLRLHFHDCFVEGCDGSILVNNGAISEKNAFGHEGVRGFEIVEAVKAELEAACPGVVSCSDIVALAARDAISLANGPAYEVPTGRRDGRVSNMSLAKDMPEVSDSIEILKAKFMQKGLNAKDLVLLSAAHTIGTTACFFMSKRLYDFLPGGQPDPTINPTFLPELTTQCPQNGDINVRLPIDRFSERLFDKQILQNIKDGFAVLQTDAGLYEDVTTRQVVDSYLGMLNPFFGPTFESDFVKAIVKMGKIGVKTGFKGEIRRVCSAFN.

The first 24 residues, 1–24 (MVWANAKMRLALSLVTVFFGISLA), serve as a signal peptide directing secretion. 4 cysteine pairs are disulfide-bonded: Cys35–Cys112, Cys68–Cys73, Cys118–Cys322, and Cys196–Cys228. His66 acts as the Proton acceptor in catalysis. Asp67, Val70, Gly72, Asp74, and Ser76 together coordinate Ca(2+). An N-linked (GlcNAc...) asparagine glycan is attached at Asn151. Pro159 provides a ligand contact to substrate. His189 is a heme b binding site. Thr190 is a binding site for Ca(2+). Ca(2+)-binding residues include Asp241, Ser244, and Asp249.

This sequence belongs to the peroxidase family. Classical plant (class III) peroxidase subfamily. Heme b is required as a cofactor. The cofactor is Ca(2+).

The protein localises to the secreted. It carries out the reaction 2 a phenolic donor + H2O2 = 2 a phenolic radical donor + 2 H2O. Its function is as follows. Removal of H(2)O(2), oxidation of toxic reductants, biosynthesis and degradation of lignin, suberization, auxin catabolism, response to environmental stresses such as wounding, pathogen attack and oxidative stress. These functions might be dependent on each isozyme/isoform in each plant tissue. The chain is Peroxidase 43 (PER43) from Arabidopsis thaliana (Mouse-ear cress).